The sequence spans 209 residues: Vacuolar protein sorting-associated protein 28 homolog (209 aa).

One can recognise a VPS28 N-terminal domain in the interval Met1–Asp105. Positions Asn109–Asn205 constitute a VPS28 C-terminal domain.

Belongs to the VPS28 family. In terms of assembly, component of the ESCRT-I complex (endosomal sorting complex required for transport I).

Its subcellular location is the endosome. Component of the ESCRT-I complex, a regulator of vesicular trafficking process. This is Vacuolar protein sorting-associated protein 28 homolog from Caenorhabditis briggsae.